The chain runs to 238 residues: Ribosomal RNA small subunit methyltransferase G (238 aa).

Residues glycine 77, phenylalanine 82, 128-129, and arginine 147 each bind S-adenosyl-L-methionine; that span reads AE.

The protein belongs to the methyltransferase superfamily. RNA methyltransferase RsmG family.

The protein localises to the cytoplasm. Its function is as follows. Specifically methylates the N7 position of guanine in position 535 of 16S rRNA. This is Ribosomal RNA small subunit methyltransferase G from Lysinibacillus sphaericus (strain C3-41).